The chain runs to 395 residues: Chaperone protein DnaJ 2 (395 aa).

Residues 10 to 75 enclose the J domain; sequence NYYADLGVSS…KKRKEYDELK (66 aa). The CR-type zinc-finger motif lies at 165–242; the sequence is GTTIPVELTG…CHGRGTVRKS (78 aa). C178, C181, C194, C197, C216, C219, C230, and C233 together coordinate Zn(2+). 4 CXXCXGXG motif repeats span residues 178–185, 194–201, 216–223, and 230–237; these read CNTCHGSG, CGTCDGTG, CATCGGTG, and CDNCHGRG.

The protein belongs to the DnaJ family. As to quaternary structure, homodimer. It depends on Zn(2+) as a cofactor.

The protein resides in the cytoplasm. Participates actively in the response to hyperosmotic and heat shock by preventing the aggregation of stress-denatured proteins and by disaggregating proteins, also in an autonomous, DnaK-independent fashion. Unfolded proteins bind initially to DnaJ; upon interaction with the DnaJ-bound protein, DnaK hydrolyzes its bound ATP, resulting in the formation of a stable complex. GrpE releases ADP from DnaK; ATP binding to DnaK triggers the release of the substrate protein, thus completing the reaction cycle. Several rounds of ATP-dependent interactions between DnaJ, DnaK and GrpE are required for fully efficient folding. Also involved, together with DnaK and GrpE, in the DNA replication of plasmids through activation of initiation proteins. This chain is Chaperone protein DnaJ 2, found in Corynebacterium glutamicum (strain ATCC 13032 / DSM 20300 / JCM 1318 / BCRC 11384 / CCUG 27702 / LMG 3730 / NBRC 12168 / NCIMB 10025 / NRRL B-2784 / 534).